The following is a 28-amino-acid chain: uncharacterized protein (28 aa).

Residues S5–L27 traverse the membrane as a helical segment.

Its subcellular location is the membrane. This is an uncharacterized protein from Saccharomyces cerevisiae (strain ATCC 204508 / S288c) (Baker's yeast).